The following is a 982-amino-acid chain: Bifunctional glutamine synthetase adenylyltransferase/adenylyl-removing enzyme (982 aa).

The adenylyl removase stretch occupies residues 1–460; it reads MSLPSLANLP…HFRQVIADPD (460 aa). The adenylyl transferase stretch occupies residues 473-982; that stretch reads GAEWIPLWEE…IRIWRELRLG (510 aa).

Belongs to the GlnE family. It depends on Mg(2+) as a cofactor.

The catalysed reaction is [glutamine synthetase]-O(4)-(5'-adenylyl)-L-tyrosine + phosphate = [glutamine synthetase]-L-tyrosine + ADP. It carries out the reaction [glutamine synthetase]-L-tyrosine + ATP = [glutamine synthetase]-O(4)-(5'-adenylyl)-L-tyrosine + diphosphate. In terms of biological role, involved in the regulation of glutamine synthetase GlnA, a key enzyme in the process to assimilate ammonia. When cellular nitrogen levels are high, the C-terminal adenylyl transferase (AT) inactivates GlnA by covalent transfer of an adenylyl group from ATP to specific tyrosine residue of GlnA, thus reducing its activity. Conversely, when nitrogen levels are low, the N-terminal adenylyl removase (AR) activates GlnA by removing the adenylyl group by phosphorolysis, increasing its activity. The regulatory region of GlnE binds the signal transduction protein PII (GlnB) which indicates the nitrogen status of the cell. This Pseudomonas aeruginosa (strain ATCC 15692 / DSM 22644 / CIP 104116 / JCM 14847 / LMG 12228 / 1C / PRS 101 / PAO1) protein is Bifunctional glutamine synthetase adenylyltransferase/adenylyl-removing enzyme.